The chain runs to 1663 residues: Complement C3 (1663 aa).

The first 22 residues, 1–22, serve as a signal peptide directing secretion; that stretch reads MGPTSGPSLLLLLLTHLPLALG. Phosphoserine; by FAM20C is present on residues Ser38 and Ser70. Residue Asn85 is glycosylated (N-linked (GlcNAc...) asparagine). Phosphoserine; by FAM20C is present on residues Ser297 and Ser303. 13 disulfides stabilise this stretch: Cys559–Cys816, Cys627–Cys662, Cys693–Cys720, Cys694–Cys727, Cys707–Cys728, Cys873–Cys1513, Cys1101–Cys1158, Cys1358–Cys1489, Cys1389–Cys1458, Cys1506–Cys1511, Cys1518–Cys1590, Cys1537–Cys1661, and Cys1637–Cys1646. Residue Ser672 is modified to Phosphoserine; by FAM20C. Residues 693–728 enclose the Anaphylatoxin-like domain; the sequence is CCEDGMRENPMRFSCQRRTRFISLGEACKKVFLDCC. Asn939 is a glycosylation site (N-linked (GlcNAc...) asparagine). Residues 954-973 form a disordered region; sequence REGVQKEDIPPADLSDQVPD. Ser968 carries the post-translational modification Phosphoserine; by FAM20C. Residues 1010–1013 constitute a cross-link (isoglutamyl cysteine thioester (Cys-Gln)); the sequence is CGEQ. At Ser1321 the chain carries Phosphoserine; by FAM20C. Residues 1518–1661 form the NTR domain; sequence CFIQKSDDKV…FTESMVVFGC (144 aa). Ser1573 is subject to Phosphoserine; by FAM20C. Asn1617 is a glycosylation site (N-linked (GlcNAc...) asparagine). The interval 1634 to 1659 is interaction with CFP/properdin; the sequence is EDECQDEENQKQCQDLGAFTESMVVF.

As to quaternary structure, in absence of complement activation, the C3 precursor is first processed by the removal of 4 Arg residues, forming two chains, beta and alpha, linked by a disulfide bond. Complement C3b is composed of complement C3b and complement C3 beta chains that are associated via disulfide bonds. Non-enzymatic component of the C5 convertase, also named C4bC2bC3b, composed of the serine protease complement C2b (C2), complement C3b, as well as complement C4b (C4). Non-enzymatic component of the C5 convertase of the alternative complement pathways composed of the serine protease complement CFB and complement C3b. Interacts with CFP; interaction takes place together with CFB in the alternative complement system and allows the complex to become active. Interacts with CR1 (via Sushi 8 and Sushi 9 domains). Interacts with CFH. In terms of assembly, interacts with CFH. Interacts with CR2. As to quaternary structure, during pregnancy, C3dg exists as a complex (probably a 2:2:2 heterohexamer) with AGT and the proform of PRG2. Interacts with CR2 (via the N-terminal Sushi domains 1 and 2). (Microbial infection) C3b interacts with herpes simplex virus 1 (HHV-1) and herpes simplex virus 2 (HHV-2) envelope glycoprotein C; this interaction inhibits the activation of the complement system. In terms of assembly, (Microbial infection) Interacts with Staphylococcus aureus immunoglobulin-binding protein Sbi; this interaction prevents the association between C3dg and CR2. As to quaternary structure, (Microbial infection) Interacts with Staphylococcus aureus protein Fib. Post-translationally, C3 precursor is first processed by the removal of 4 Arg residues, forming two chains, beta and alpha, linked by a disulfide bond. During activation of the complement systems, the alpha chain is cleaved into C3a and C3b by the C3 convertase: C3b stays linked to the beta chain, while C3a is released in the plasma. The alpha chain is cleaved by the serine protease complement C2b component of the C3 convertase to generate C3a and C3b following activation by the classical, lectin and GZMK complement systems. The alpha chain is cleaved by CFB component of the C3 convertase to generate C3a and C3b following activation by the alternative complement system. C3a is further processed by carboxypeptidases to release the C-terminal arginine residue generating the acylation stimulating protein (ASP). Levels of ASP are increased in adipocytes in the postprandial period and by insulin and dietary chylomicrons. In terms of processing, complement C3b is rapidly split in two positions by factor I (CFI) and a cofactor (CFH) to form iC3b (inactivated C3b) and C3f which is released. CFI and CFH catalyze proteolytic degradation of already-deposited complement C3b. Then iC3b is slowly cleaved (possibly by CFI) to form C3c (beta chain + alpha' chain fragment 1 + alpha' chain fragment 2), C3dg and C3f. Other proteases produce other fragments such as C3d or C3g. Post-translationally, upon activation, the internal thioester bond reacts with carbohydrate antigens on the target surface to form amide or ester bonds, leading to covalent association with the surface of pathogens. Complement C3b interacts with complement C4b via a thioester linkage. In terms of processing, phosphorylated by FAM20C in the extracellular medium. Post-translationally, (Microbial infection) C3 is cleaved by Staphylococcus aureus aureolysin; this cleavage renders C3a and C3b inactive. C3b is rapidly degraded by host factors CFH and CFI preventing its deposition on the bacterial surface while C3a is further inactivated by aureolysin. (Microbial infection) Complement C3 beta chain is cleaved and inactivated by S.pyogenes SpeB. In terms of processing, (Microbial infection) Cleaved by N.meningitidis NalP between Leu-744 and Gly-745, generating a slightly shorter C3 alpha form and a slightly longer C3 beta form. The C3b-like fragment is degraded in the presence of the complement regulators CFH and CFI, preventing its deposition on the bacterial surface. As to expression, plasma. In terms of tissue distribution, produced in adipocytes and released into the plasma during both the fasting and postprandial periods.

The protein resides in the secreted. It localises to the cell surface. Its activity is regulated as follows. Complement activation is inhibited by VSIG4. Precursor of non-enzymatic components of the classical, alternative, lectin and GZMK complement pathways, which consist in a cascade of proteins that leads to phagocytosis and breakdown of pathogens and signaling that strengthens the adaptive immune system. Its function is as follows. Non-enzymatic component of C5 convertase. Generated following cleavage by C3 convertase, it covalently attaches to the surface of pathogens, where it acts as an opsonin that marks the surface of antigens for removal. Complement C3b binds covalently via its reactive thioester, to cell surface carbohydrates or immune aggregates. Together with complement C4b, it then recruits the serine protease complement C2b to form the C5 convertase, which cleaves and activate C5, the next component of the complement pathways. In the alternative complement pathway, recruits the serine protease CFB to form the C5 convertase that cleaves and activates C5. Functionally, mediator of local inflammatory process released following cleavage by C3 convertase. Acts by binding to its receptor, C3AR1, activating G protein-coupled receptor signaling, promoting the phosphorylation, ARRB2-mediated internalization and endocytosis of C3AR1. C3a anaphylatoxin stimulates the activation of immune cells such as mast cells and basophilic leukocytes to release inflammation agents, such as cytokines, chemokines and histamine, which promote inflammation development. Also acts as potent chemoattractant for the migration of macrophages and neutrophils to the inflamed tissues, resulting in neutralization of the inflammatory triggers by multiple ways, such as phagocytosis and generation of reactive oxidants. In terms of biological role, adipogenic hormone that stimulates triglyceride synthesis and glucose transport in adipocytes, regulating fat storage and playing a role in postprandial triglyceride clearance. Appears to stimulate triglyceride synthesis via activation of the PLC, MAPK and AKT signaling pathways. Acts by binding to its receptor, C5AR2, activating G protein-coupled receptor signaling, promoting the phosphorylation, ARRB2-mediated internalization and endocytosis of C5AR2. Acts as a chemoattractant for neutrophils in chronic inflammation. The protein is Complement C3 of Homo sapiens (Human).